Reading from the N-terminus, the 382-residue chain is Bifunctional enzyme IspD/IspF (382 aa).

A 2-C-methyl-D-erythritol 4-phosphate cytidylyltransferase region spans residues 1–225 (MTFSVVIVAA…EHLAGVARVT (225 aa)). The tract at residues 226–382 (RVGQGFDAHR…SAVVAVETPA (157 aa)) is 2-C-methyl-D-erythritol 2,4-cyclodiphosphate synthase. A divalent metal cation-binding residues include D232 and H234. Residues 232 to 234 (DAH) and 258 to 259 (HS) each bind 4-CDP-2-C-methyl-D-erythritol 2-phosphate. Residue H266 coordinates a divalent metal cation. 4-CDP-2-C-methyl-D-erythritol 2-phosphate contacts are provided by residues 280–282 (DIG), 356–359 (TTTE), F363, and R366.

In the N-terminal section; belongs to the IspD/TarI cytidylyltransferase family. IspD subfamily. This sequence in the C-terminal section; belongs to the IspF family. It depends on a divalent metal cation as a cofactor.

The enzyme catalyses 2-C-methyl-D-erythritol 4-phosphate + CTP + H(+) = 4-CDP-2-C-methyl-D-erythritol + diphosphate. It catalyses the reaction 4-CDP-2-C-methyl-D-erythritol 2-phosphate = 2-C-methyl-D-erythritol 2,4-cyclic diphosphate + CMP. It functions in the pathway isoprenoid biosynthesis; isopentenyl diphosphate biosynthesis via DXP pathway; isopentenyl diphosphate from 1-deoxy-D-xylulose 5-phosphate: step 2/6. It participates in isoprenoid biosynthesis; isopentenyl diphosphate biosynthesis via DXP pathway; isopentenyl diphosphate from 1-deoxy-D-xylulose 5-phosphate: step 4/6. Its function is as follows. Bifunctional enzyme that catalyzes the formation of 4-diphosphocytidyl-2-C-methyl-D-erythritol from CTP and 2-C-methyl-D-erythritol 4-phosphate (MEP) (IspD), and catalyzes the conversion of 4-diphosphocytidyl-2-C-methyl-D-erythritol 2-phosphate (CDP-ME2P) to 2-C-methyl-D-erythritol 2,4-cyclodiphosphate (ME-CPP) with a corresponding release of cytidine 5-monophosphate (CMP) (IspF). In Caulobacter vibrioides (strain ATCC 19089 / CIP 103742 / CB 15) (Caulobacter crescentus), this protein is Bifunctional enzyme IspD/IspF.